The chain runs to 636 residues: 1-deoxy-D-xylulose-5-phosphate synthase (636 aa).

Thiamine diphosphate contacts are provided by residues H75 and 116–118 (AHS). D147 provides a ligand contact to Mg(2+). Thiamine diphosphate-binding positions include 148–149 (GA), N177, Y288, and E370. N177 contacts Mg(2+).

Belongs to the transketolase family. DXPS subfamily. As to quaternary structure, homodimer. Requires Mg(2+) as cofactor. Thiamine diphosphate is required as a cofactor.

It catalyses the reaction D-glyceraldehyde 3-phosphate + pyruvate + H(+) = 1-deoxy-D-xylulose 5-phosphate + CO2. Its pathway is metabolic intermediate biosynthesis; 1-deoxy-D-xylulose 5-phosphate biosynthesis; 1-deoxy-D-xylulose 5-phosphate from D-glyceraldehyde 3-phosphate and pyruvate: step 1/1. Functionally, catalyzes the acyloin condensation reaction between C atoms 2 and 3 of pyruvate and glyceraldehyde 3-phosphate to yield 1-deoxy-D-xylulose-5-phosphate (DXP). The protein is 1-deoxy-D-xylulose-5-phosphate synthase of Ralstonia nicotianae (strain ATCC BAA-1114 / GMI1000) (Ralstonia solanacearum).